Reading from the N-terminus, the 62-residue chain is Photosystem II reaction center protein Z (62 aa).

The next 2 membrane-spanning stretches (helical) occupy residues 8–28 (ALIG…VAYA) and 41–61 (WVGS…NFFV).

This sequence belongs to the PsbZ family. In terms of assembly, PSII is composed of 1 copy each of membrane proteins PsbA, PsbB, PsbC, PsbD, PsbE, PsbF, PsbH, PsbI, PsbJ, PsbK, PsbL, PsbM, PsbT, PsbX, PsbY, PsbZ, Psb30/Ycf12, peripheral proteins PsbO, CyanoQ (PsbQ), PsbU, PsbV and a large number of cofactors. It forms dimeric complexes.

Its subcellular location is the cellular thylakoid membrane. In terms of biological role, may control the interaction of photosystem II (PSII) cores with the light-harvesting antenna, regulates electron flow through the 2 photosystem reaction centers. PSII is a light-driven water plastoquinone oxidoreductase, using light energy to abstract electrons from H(2)O, generating a proton gradient subsequently used for ATP formation. The sequence is that of Photosystem II reaction center protein Z from Nostoc punctiforme (strain ATCC 29133 / PCC 73102).